The following is a 240-amino-acid chain: Carboxy-S-adenosyl-L-methionine synthase (240 aa).

S-adenosyl-L-methionine is bound by residues Tyr-35, 61 to 63 (GCS), 86 to 87 (DN), 112 to 113 (DI), and Arg-194.

The protein belongs to the class I-like SAM-binding methyltransferase superfamily. Cx-SAM synthase family. In terms of assembly, homodimer.

It carries out the reaction prephenate + S-adenosyl-L-methionine = carboxy-S-adenosyl-L-methionine + 3-phenylpyruvate + H2O. In terms of biological role, catalyzes the conversion of S-adenosyl-L-methionine (SAM) to carboxy-S-adenosyl-L-methionine (Cx-SAM). In Wolinella succinogenes (strain ATCC 29543 / DSM 1740 / CCUG 13145 / JCM 31913 / LMG 7466 / NCTC 11488 / FDC 602W) (Vibrio succinogenes), this protein is Carboxy-S-adenosyl-L-methionine synthase.